The chain runs to 338 residues: uncharacterized protein (338 aa).

6 helical membrane-spanning segments follow: residues 13–33, 71–91, 110–130, 176–196, 218–238, and 301–321; these read PAYSHVLIAGGIGGATADFLM, GLYSGVCPMLIGSLPATALFF, TLCFLLAGFVGDLFASVVYVP, YGYRATILRDIPFSGFQLLFY, LITGSLAGAGAGFLTTPLDVA, and FRGFGPRIFWTSSQSSLMFVF. Solcar repeat units lie at residues 13-100, 108-202, and 216-328; these read PAYS…TKRH, PETL…LRQV, and RELI…IIRL.

Belongs to the mitochondrial carrier (TC 2.A.29) family.

Its subcellular location is the mitochondrion inner membrane. Functionally, mitochondrial solute carriers shuttle metabolites, nucleotides, and cofactors through the mitochondrial inner membrane. This is an uncharacterized protein from Schizosaccharomyces pombe (strain 972 / ATCC 24843) (Fission yeast).